The chain runs to 285 residues: NAD kinase (285 aa).

The Proton acceptor role is filled by Asp-64. NAD(+) contacts are provided by residues 64-65, 140-141, Arg-151, Arg-168, Asp-170, and 181-186; these read DG, ND, and TGYNLS.

This sequence belongs to the NAD kinase family. Requires a divalent metal cation as cofactor.

The protein localises to the cytoplasm. The enzyme catalyses NAD(+) + ATP = ADP + NADP(+) + H(+). In terms of biological role, involved in the regulation of the intracellular balance of NAD and NADP, and is a key enzyme in the biosynthesis of NADP. Catalyzes specifically the phosphorylation on 2'-hydroxyl of the adenosine moiety of NAD to yield NADP. The protein is NAD kinase of Lachnoclostridium phytofermentans (strain ATCC 700394 / DSM 18823 / ISDg) (Clostridium phytofermentans).